Here is a 379-residue protein sequence, read N- to C-terminus: Cobalt-precorrin-5B C(1)-methyltransferase (379 aa).

The protein belongs to the CbiD family.

The catalysed reaction is Co-precorrin-5B + S-adenosyl-L-methionine = Co-precorrin-6A + S-adenosyl-L-homocysteine. Its pathway is cofactor biosynthesis; adenosylcobalamin biosynthesis; cob(II)yrinate a,c-diamide from sirohydrochlorin (anaerobic route): step 6/10. Catalyzes the methylation of C-1 in cobalt-precorrin-5B to form cobalt-precorrin-6A. This chain is Cobalt-precorrin-5B C(1)-methyltransferase, found in Salmonella schwarzengrund (strain CVM19633).